The primary structure comprises 469 residues: ATP synthase subunit beta (469 aa).

Residue Gly156–Thr163 coordinates ATP.

The protein belongs to the ATPase alpha/beta chains family. In terms of assembly, F-type ATPases have 2 components, CF(1) - the catalytic core - and CF(0) - the membrane proton channel. CF(1) has five subunits: alpha(3), beta(3), gamma(1), delta(1), epsilon(1). CF(0) has three main subunits: a(1), b(2) and c(9-12). The alpha and beta chains form an alternating ring which encloses part of the gamma chain. CF(1) is attached to CF(0) by a central stalk formed by the gamma and epsilon chains, while a peripheral stalk is formed by the delta and b chains.

The protein localises to the cell membrane. It carries out the reaction ATP + H2O + 4 H(+)(in) = ADP + phosphate + 5 H(+)(out). In terms of biological role, produces ATP from ADP in the presence of a proton gradient across the membrane. The catalytic sites are hosted primarily by the beta subunits. The polypeptide is ATP synthase subunit beta (Bacillus mycoides (strain KBAB4) (Bacillus weihenstephanensis)).